The sequence spans 634 residues: DNA-directed RNA polymerase subunit gamma (634 aa).

Zn(2+) is bound by residues Cys74, Cys76, Cys89, and Cys92. The Mg(2+) site is built by Asp471, Asp473, and Asp475.

The protein belongs to the RNA polymerase beta' chain family. RpoC1 subfamily. In cyanobacteria the RNAP catalytic core is composed of 2 alpha, 1 beta, 1 beta', 1 gamma and 1 omega subunit. When a sigma factor is associated with the core the holoenzyme is formed, which can initiate transcription. The cofactor is Mg(2+). Requires Zn(2+) as cofactor.

It carries out the reaction RNA(n) + a ribonucleoside 5'-triphosphate = RNA(n+1) + diphosphate. In terms of biological role, DNA-dependent RNA polymerase catalyzes the transcription of DNA into RNA using the four ribonucleoside triphosphates as substrates. The sequence is that of DNA-directed RNA polymerase subunit gamma from Parasynechococcus marenigrum (strain WH8102).